A 191-amino-acid chain; its full sequence is Prophage tail fiber assembly protein homolog TfaR (191 aa).

It belongs to the tfa family.

This chain is Prophage tail fiber assembly protein homolog TfaR (tfaR), found in Escherichia coli (strain K12).